A 536-amino-acid polypeptide reads, in one-letter code: Probable cytochrome P450 520A1 (536 aa).

The chain crosses the membrane as a helical span at residues M1–K21. Position 479 (C479) interacts with heme.

It belongs to the cytochrome P450 family. Requires heme as cofactor.

The protein localises to the membrane. This chain is Probable cytochrome P450 520A1 (cyp520A1), found in Dictyostelium discoideum (Social amoeba).